The chain runs to 1011 residues: DNA-directed RNA polymerase subunit beta'' (1011 aa).

Zn(2+) is bound by residues cysteine 216, cysteine 282, cysteine 288, and cysteine 291.

This sequence belongs to the RNA polymerase beta' chain family. RpoC2 subfamily. As to quaternary structure, in plastids the minimal PEP RNA polymerase catalytic core is composed of four subunits: alpha, beta, beta', and beta''. When a (nuclear-encoded) sigma factor is associated with the core the holoenzyme is formed, which can initiate transcription. Requires Zn(2+) as cofactor.

It is found in the plastid. Its subcellular location is the chloroplast. It catalyses the reaction RNA(n) + a ribonucleoside 5'-triphosphate = RNA(n+1) + diphosphate. In terms of biological role, DNA-dependent RNA polymerase catalyzes the transcription of DNA into RNA using the four ribonucleoside triphosphates as substrates. This Ostreococcus tauri protein is DNA-directed RNA polymerase subunit beta''.